Consider the following 463-residue polypeptide: MGFLKLSPMILLLAMIGVSYAMDMSIISYDENHHITTETSRSDSEVERIYEAWMVEHGKKKMNQNGLGAEKDQRFEIFKDNLRFIDEHNTKNLSYKLGLTRFADLTNEEYRSMYLGAKPTKRVLKTSDRYQARVGDALPDSVDWRKEGAVADVKDQGSCGSCWAFSTIGAVEGINKIVTGDLISLSEQELVDCDTSYNQGCNGGLMDYAFEFIIKNGGIDTEADYPYKAADGRCDQNRKNAKVVTIDSYEDVPENSEASLKKALAHQPISVAIEAGGRAFQLYSSGVFDGLCGTELDHGVVAVGYGTENGKDYWIVRNSWGNRWGESGYIKMARNIEAPTGKCGIAMEASYPIKKGQNPPNPGPSPPSPIKPPTTCDKYFSCPESNTCCCLYKYGKYCFGWGCCPLEAATCCDDNSSCCPHEYPVCDVNRGTCLMSKNSPFSVKALKRTPAIPFWAKSRKHIA.

A signal peptide spans 1–21; that stretch reads MGFLKLSPMILLLAMIGVSYA. The propeptide at 22–137 is activation peptide; sequence MDMSIISYDE…DRYQARVGDA (116 aa). The N-linked (GlcNAc...) asparagine glycan is linked to N92. 5 disulfide bridges follow: C159/C201, C193/C234, C292/C343, C376/C388, and C382/C403. Residue C162 is part of the active site. Catalysis depends on residues H298 and N318. A propeptide spans 354–463 (removed in mature form); that stretch reads KKGQNPPNPG…FWAKSRKHIA (110 aa). N415 carries N-linked (GlcNAc...) asparagine glycosylation.

Belongs to the peptidase C1 family. In terms of assembly, interacts with PRN2. Interacts with WSCP.

In terms of biological role, probable thiol protease. The sequence is that of Probable cysteine protease RD21B from Arabidopsis thaliana (Mouse-ear cress).